The primary structure comprises 1124 residues: Phytochrome A1 (1124 aa).

Residues 1–14 are compositionally biased toward low complexity; that stretch reads MSSSRPSQSSTTSA. The tract at residues 1-20 is disordered; it reads MSSSRPSQSSTTSARSKHSA. Residues 218–401 enclose the GAF domain; sequence SMERLCDTMV…VFAIHVNKEL (184 aa). C323 contributes to the phytochromobilin binding site. Residues 617-687 form the PAS 1 domain; it reads VTAEMVRLIE…KMLELALQGK (71 aa). The region spanning 690 to 746 is the PAC domain; that stretch reads RNVEFEIKTHGPSGDSSPISLIVNACASRDVGDSVVGVCFIAQDITGQKNIMDKFTR. The PAS 2 domain maps to 747 to 821; it reads IEGDYRAIIQ…KNQEAFVNFG (75 aa). Residues 901–1118 enclose the Histidine kinase domain; it reads YIRRQIRNPL…TFIISVELAV (218 aa).

Belongs to the phytochrome family. In terms of assembly, homodimer. In terms of processing, contains one covalently linked phytochromobilin chromophore.

Regulatory photoreceptor which exists in two forms that are reversibly interconvertible by light: the Pr form that absorbs maximally in the red region of the spectrum and the Pfr form that absorbs maximally in the far-red region. Photoconversion of Pr to Pfr induces an array of morphogenic responses, whereas reconversion of Pfr to Pr cancels the induction of those responses. Pfr controls the expression of a number of nuclear genes including those encoding the small subunit of ribulose-bisphosphate carboxylase, chlorophyll A/B binding protein, protochlorophyllide reductase, rRNA, etc. It also controls the expression of its own gene(s) in a negative feedback fashion. In Nicotiana tabacum (Common tobacco), this protein is Phytochrome A1 (PHYA1).